The sequence spans 635 residues: DNA mismatch repair protein MutL (635 aa).

A disordered region spans residues 359–399 (GTNKYAQPEAAKSSAAEQAVARERSSARERAAPAYKEDHPY). Residues 364–377 (AQPEAAKSSAAEQA) show a composition bias toward low complexity. Residues 378 to 399 (VARERSSARERAAPAYKEDHPY) show a composition bias toward basic and acidic residues.

The protein belongs to the DNA mismatch repair MutL/HexB family.

Its function is as follows. This protein is involved in the repair of mismatches in DNA. It is required for dam-dependent methyl-directed DNA mismatch repair. May act as a 'molecular matchmaker', a protein that promotes the formation of a stable complex between two or more DNA-binding proteins in an ATP-dependent manner without itself being part of a final effector complex. This chain is DNA mismatch repair protein MutL, found in Yersinia pestis bv. Antiqua (strain Antiqua).